Here is a 2586-residue protein sequence, read N- to C-terminus: Highly reducing polyketide synthase FUM1 (2586 aa).

Residues 29-451 (VLPVAIVGMG…GANAHCIIET (423 aa)) form the Ketosynthase family 3 (KS3) domain. Catalysis depends on for beta-ketoacyl synthase activity residues cysteine 201, histidine 336, and histidine 374. Residues 609–928 (IFTGQGAQWV…TESLLKLAGE (320 aa)) form a malonyl-CoA:ACP transacylase (MAT) domain region. The N-terminal hotdog fold stretch occupies residues 980–1111 (HELLGSRTLE…GQVRPGQDAH (132 aa)). The segment at 980 to 1269 (HELLGSRTLE…LEDGKFSPLE (290 aa)) is dehydratase (DH) domain. A PKS/mFAS DH domain is found at 980–1274 (HELLGSRTLE…FSPLEMDLAE (295 aa)). The active-site Proton acceptor; for dehydratase activity is the histidine 1012. Residues 1125–1274 (QHYPRLVDNL…FSPLEMDLAE (150 aa)) are C-terminal hotdog fold. Residue aspartate 1186 is the Proton donor; for dehydratase activity of the active site. The methyltransferase (CMet) domain stretch occupies residues 1450–1627 (DFFATAGHTR…GFSGVDSAIY (178 aa)). The enoyl reductase (ER) (ER) domain stretch occupies residues 1862 to 2172 (GLLQTLGWVP…KGVHLGKIVV (311 aa)). The interval 2197 to 2373 (ASYLLVGGLG…ASVLQIGLIE (177 aa)) is ketoreductase (KR) domain. One can recognise a Carrier domain in the interval 2486–2565 (PATVELVTNE…GLARLTVDGL (80 aa)). O-(pantetheine 4'-phosphoryl)serine is present on serine 2524.

Its pathway is mycotoxin biosynthesis. Highly reducing polyketide synthase; part of the gene cluster that mediates the biosynthesis of fumonisins B1 (FB1), B2 (FB2), B3 (FB3), and B4 (FB4), which are carcinogenic mycotoxins. The biosynthesis starts with the FUM1-catalyzed carbon chain assembly from one molecule of acetyl-CoA, eight molecules of malonyl-CoA, and two molecules of methionine (in S-adenosyl form). The C18 polyketide chain is released from the enzyme by a nucleophilic attack of a carbanion, which is derived from R-carbon of alanine by decarboxylation, on the carbonyl carbon of polyketide acyl chain. This step is catalyzed by the pyridoxal 5'-phosphate-dependent aminoacyl transferase FUM8. The resultant 3-keto intermediate is then stereospecifically reduced to a 3-hydroxyl product by reductase FUM13. Subsequent oxidations at C-10 by the cytochrome P450 monooxygenase FUM2, C-14 and C-15 by FUM6, FUM12 or FUM15, tricarballylic esterification of the hydroxyl groups on C-14 and C-15 by acyltransferase FUM14, and C-5 hydroxylation by 2-keto-glutarate-dependent dioxygenase FUM3 furnish the biosynthesis of fumonisins. The tricarballylic moieties are most likely derived from the citric acid cycle, and their addition to the carbon backbone may involve FUM7, FUM10, FUM11 and FUM14. The polypeptide is Highly reducing polyketide synthase FUM1 (Gibberella moniliformis (strain M3125 / FGSC 7600) (Maize ear and stalk rot fungus)).